We begin with the raw amino-acid sequence, 343 residues long: L-threonine 3-dehydrogenase (343 aa).

Cysteine 40 contacts Zn(2+). Residues threonine 42 and histidine 45 each act as charge relay system in the active site. Positions 65, 66, 95, 98, 101, and 109 each coordinate Zn(2+). NAD(+) contacts are provided by residues isoleucine 177, aspartate 197, arginine 202, 264–266 (LGI), and 288–289 (IY).

It belongs to the zinc-containing alcohol dehydrogenase family. In terms of assembly, homotetramer. It depends on Zn(2+) as a cofactor.

The protein localises to the cytoplasm. It carries out the reaction L-threonine + NAD(+) = (2S)-2-amino-3-oxobutanoate + NADH + H(+). Its pathway is amino-acid degradation; L-threonine degradation via oxydo-reductase pathway; glycine from L-threonine: step 1/2. Catalyzes the NAD(+)-dependent oxidation of L-threonine to 2-amino-3-ketobutyrate. This is L-threonine 3-dehydrogenase from Aliivibrio salmonicida (strain LFI1238) (Vibrio salmonicida (strain LFI1238)).